Here is a 255-residue protein sequence, read N- to C-terminus: Imidazole glycerol phosphate synthase subunit HisF (255 aa).

Residues Asp11 and Asp130 contribute to the active site.

Belongs to the HisA/HisF family. As to quaternary structure, heterodimer of HisH and HisF.

It is found in the cytoplasm. The enzyme catalyses 5-[(5-phospho-1-deoxy-D-ribulos-1-ylimino)methylamino]-1-(5-phospho-beta-D-ribosyl)imidazole-4-carboxamide + L-glutamine = D-erythro-1-(imidazol-4-yl)glycerol 3-phosphate + 5-amino-1-(5-phospho-beta-D-ribosyl)imidazole-4-carboxamide + L-glutamate + H(+). It functions in the pathway amino-acid biosynthesis; L-histidine biosynthesis; L-histidine from 5-phospho-alpha-D-ribose 1-diphosphate: step 5/9. In terms of biological role, IGPS catalyzes the conversion of PRFAR and glutamine to IGP, AICAR and glutamate. The HisF subunit catalyzes the cyclization activity that produces IGP and AICAR from PRFAR using the ammonia provided by the HisH subunit. In Prochlorococcus marinus subsp. pastoris (strain CCMP1986 / NIES-2087 / MED4), this protein is Imidazole glycerol phosphate synthase subunit HisF.